The chain runs to 476 residues: Probable cytosolic Fe-S cluster assembly factor GH10760 (476 aa).

Positions 23, 68, 71, 74, 187, 243, 395, and 399 each coordinate [4Fe-4S] cluster.

The protein belongs to the NARF family.

In terms of biological role, component of the cytosolic iron-sulfur (Fe/S) protein assembly machinery. Required for maturation of extramitochondrial Fe/S proteins. In Drosophila grimshawi (Hawaiian fruit fly), this protein is Probable cytosolic Fe-S cluster assembly factor GH10760.